A 42-amino-acid chain; its full sequence is Cytochrome b559 subunit beta (42 aa).

A helical membrane pass occupies residues 17 to 33; the sequence is WLAIHGLAVPTVFFLGA. A heme-binding site is contributed by His21.

Belongs to the PsbE/PsbF family. In terms of assembly, heterodimer of an alpha subunit and a beta subunit. PSII is composed of 1 copy each of membrane proteins PsbA, PsbB, PsbC, PsbD, PsbE, PsbF, PsbH, PsbI, PsbJ, PsbK, PsbL, PsbM, PsbT, PsbX, PsbY, PsbZ, Psb30/Ycf12, at least 3 peripheral proteins of the oxygen-evolving complex and a large number of cofactors. It forms dimeric complexes. Heme b serves as cofactor.

The protein localises to the plastid. Its subcellular location is the chloroplast thylakoid membrane. In terms of biological role, this b-type cytochrome is tightly associated with the reaction center of photosystem II (PSII). PSII is a light-driven water:plastoquinone oxidoreductase that uses light energy to abstract electrons from H(2)O, generating O(2) and a proton gradient subsequently used for ATP formation. It consists of a core antenna complex that captures photons, and an electron transfer chain that converts photonic excitation into a charge separation. This is Cytochrome b559 subunit beta from Guillardia theta (Cryptophyte).